Consider the following 208-residue polypeptide: MTRVKICGLMDEYELECALKAGADALGFVVEIERSRHRLSLDEARNLIGMVPPFTTSVAVVEPAGVDDAVRLADYLQSDALQIHGDLSPEEIEEIKRRVPQRIIVAVPPGSDRAVEVSRIADAVLVDTPVSGGLGGSGRTHDWSVTARMRSTLHAPLILAGGLRPENVMDAINVVKPYAVDVSSGVETNGRKDPVKAEEFVRRVRSCQ.

The protein belongs to the TrpF family.

It carries out the reaction N-(5-phospho-beta-D-ribosyl)anthranilate = 1-(2-carboxyphenylamino)-1-deoxy-D-ribulose 5-phosphate. It participates in amino-acid biosynthesis; L-tryptophan biosynthesis; L-tryptophan from chorismate: step 3/5. This Methanothrix thermoacetophila (strain DSM 6194 / JCM 14653 / NBRC 101360 / PT) (Methanosaeta thermophila) protein is N-(5'-phosphoribosyl)anthranilate isomerase.